A 507-amino-acid polypeptide reads, in one-letter code: MELTLSLLTIFLLFFALSGRCSDKNDFPEGFIFGSATSAYQWEGAFDEDGRKPSVWDTFLHTRNLSNGDITSDGYHKYKEDVKLMVETGLDAFRFSISWSRLIPNGRGPVNPKGLQFYKNFIQELVSHGIEPHVTLFHYDHPQYLEDEYGGWINRRIIQDFTAYANVCFREFGHHVKFWTTINEANIFTIGGYNDGITPPGRCSSPGRNCSSGNSSTEPYIVGHNLLLAHASASRLYKQKYKDMQGGSVGFSLFSLGFTPSTSSKDDDIAVQRAKDFYFGWMLEPFIFGDYPDEMKRTVGSRLPVFSKEESEQVKGSSDFIGIIHYLAASVTSIKIKPSISGNPDFYSDMGVSMTWTVLGNFSAFEYAVAPWAMESVLEYIKQSYGNPPIYILENGTPMKQDLQLQQKDTPRIEYLHAYIAAVLKSIRNGSDTRGYFIWSFMDLYELVKGYEFSFGLYSVNFSDPHRTRSPKLSAHWYSAFLKGNTTFLGSQGIMQMQSNFSSSASS.

The N-terminal stretch at 1 to 23 is a signal peptide; the sequence is MELTLSLLTIFLLFFALSGRCSD. Gln-41 is an a beta-D-glucoside binding site. Asn-64 carries an N-linked (GlcNAc...) asparagine glycan. A beta-D-glucoside contacts are provided by residues His-138 and 183–184; that span reads NE. The Proton donor role is filled by Glu-184. Cys-203 and Cys-210 are oxidised to a cystine. Asn-209 and Asn-214 each carry an N-linked (GlcNAc...) asparagine glycan. Residue Tyr-326 coordinates a beta-D-glucoside. The N-linked (GlcNAc...) asparagine glycan is linked to Asn-361. Residue Glu-394 participates in a beta-D-glucoside binding. Glu-394 (nucleophile) is an active-site residue. N-linked (GlcNAc...) asparagine glycosylation is present at Asn-429. Positions 439 and 455 each coordinate a beta-D-glucoside. Asn-461, Asn-485, and Asn-500 each carry an N-linked (GlcNAc...) asparagine glycan.

It belongs to the glycosyl hydrolase 1 family.

It carries out the reaction Hydrolysis of terminal, non-reducing beta-D-glucosyl residues with release of beta-D-glucose.. This Arabidopsis thaliana (Mouse-ear cress) protein is Beta-glucosidase 3.